The primary structure comprises 580 residues: MATPAGRRASETERLLTPNPGYGTQVGTSPAPTTPTEEEDLRRRLKYFFMSPCDKFRAKGRKPCKLMLQVVKILVVTVQLILFGLSNQLVVTFREENTIAFRHLFLLGYSDGSDDTFAAYTQEQLYQAIFYAVDQYLILPEISLGRYAYVRGGGGPWANGSALALCQRYYHRGHVDPANDTFDIDPRVVTDCIQVDPPDRPPDIPSEDLDFLDGSASYKNLTLKFHKLINVTIHFQLKTINLQSLINNEIPDCYTFSILITFDNKAHSGRIPIRLETKTHIQECKHPSVSRHGDNSFRLLFDVVVILTCSLSFLLCARSLLRGFLLQNEFVVFMWRRRGREISLWERLEFVNGWYILLVTSDVLTISGTVMKIGIEAKNLASYDVCSILLGTSTLLVWVGVIRYLTFFHKYNILIATLRVALPSVMRFCCCVAVIYLGYCFCGWIVLGPYHVKFRSLSMVSECLFSLINGDDMFVTFAAMQAQQGHSSLVWLFSQLYLYSFISLFIYMVLSLFIALITGAYDTIKHPGGTGTEKSELQAYIEQCQDSPTSGKFRRGSGSACSLFCCCGRDSPEDHSLLVN.

The interval M1–E38 is disordered. At M1 to K65 the chain is on the cytoplasmic side. At S10 the chain carries Phosphoserine. Residues E11 to L16 carry the Dileucine motif; mediates targeting to lysosomes motif. The interaction with phosphoinositides stretch occupies residues R42–K62. A helical membrane pass occupies residues L66–S86. The Extracellular segment spans residues N87–R298. The extracellular/lumenal pore loop stretch occupies residues L107 to T121. Cysteines 166 and 192 form a disulfide. N-linked (GlcNAc...) asparagine glycosylation is found at N220 and N230. A disulfide bridge connects residues C253 and C284. A helical membrane pass occupies residues L299–L321. Over R322–F350 the chain is Cytoplasmic. A helical transmembrane segment spans residues V351–M371. The Extracellular portion of the chain corresponds to K372–S382. The chain crosses the membrane as a helical span at residues Y383 to L405. At T406–R427 the chain is on the cytoplasmic side. A helical transmembrane segment spans residues F428–G448. At P449 to S456 the chain is on the extracellular side. The segment at residues L457–F477 is an intramembrane region (pore-forming). Positions N469–F474 match the Selectivity filter motif. Over A478–W491 the chain is Extracellular. A helical membrane pass occupies residues L492–F513. The Cytoplasmic segment spans residues I514–N580. The residue at position 557 (S557) is a Phosphoserine. A Phosphoserine; by PAK modification is found at S559. Residues C565 to C567 form a required for palmitoylation and association with membranes region. The short motif at E573 to L578 is the Dileucine internalization motif; mediates AP2 complex-dependent internalization element.

This sequence belongs to the transient receptor (TC 1.A.4) family. Polycystin subfamily. MCOLN1 sub-subfamily. As to quaternary structure, homotetramer. Homooligomer. Can heterooligomerize with MCOLN2 or MCOLN3; heteromeric assemblies have different channel properties as compared to the respective homooligomers and may be tissue-specific. Interacts with PDCD6. Interacts with TMEM163. Interacts with LAPTM4B. Palmitoylated; involved in association with membranes. Post-translationally, phosphorylation by PKA inhibits channel activity. Dephosphorylation increases activity. In terms of processing, proteolytically cleaved probably involving multiple lysosomal proteases including cathepsin B; inhibits lysosomal channel activity. In terms of tissue distribution, widely expressed, with the highest expression in brain, liver and kidney.

It localises to the late endosome membrane. The protein resides in the lysosome membrane. Its subcellular location is the cytoplasmic vesicle membrane. The protein localises to the cell projection. It is found in the phagocytic cup. It localises to the cytoplasmic vesicle. The protein resides in the phagosome membrane. Its subcellular location is the cell membrane. It catalyses the reaction Ca(2+)(in) = Ca(2+)(out). The catalysed reaction is Fe(2+)(in) = Fe(2+)(out). The enzyme catalyses Mg(2+)(in) = Mg(2+)(out). It carries out the reaction K(+)(in) = K(+)(out). It catalyses the reaction Na(+)(in) = Na(+)(out). With respect to regulation, channel activity is controlled by multiple regulatory mechanisms in different subcellular compartments. Lower pH by itself has an inhibitory effect on channel conductance. Channel function is transiently modulated by changes in Ca(2+) in a pH-dependent manner; pH changes modify the aggregation state of unitary channels; a negative cooperativity between extracellular/lumenal Ca(2+) and H(+) is suggested. Fe(2+) channel activity is potentiated by low pH. Regulated by phosphoinositides in a compartment-specific manner: in lysosomes activated by PtdIns(3,5)P2 (Phosphatidylinositol 3,5-bisphosphate) and at the plasma membrane inhibited by PtdIns(4,5)P2 (Phosphatidylinositol 4,5-bisphosphate). Nonselective cation channel probably playing a role in the regulation of membrane trafficking events and of metal homeostasis. Acts as a Ca(2+)-permeable cation channel with inwardly rectifying activity. Proposed to play a major role in Ca(2+) release from late endosome and lysosome vesicles to the cytoplasm, which is important for many lysosome-dependent cellular events, including the fusion and trafficking of these organelles, exocytosis and autophagy. Required for efficient uptake of large particles in macrophages in which Ca(2+) release from the lysosomes triggers lysosomal exocytosis. May also play a role in phagosome-lysosome fusion. Involved in lactosylceramide trafficking indicative for a role in the regulation of late endocytic membrane fusion/fission events. By mediating lysosomal Ca(2+) release is involved in regulation of mTORC1 signaling and in mTOR/TFEB-dependent lysosomal adaptation to environmental cues such as nutrient levels. Seems to act as lysosomal active oxygen species (ROS) sensor involved in ROS-induced TFEB activation and autophagy. Also functions as a Fe(2+) permeable channel in late endosomes and lysosomes. Also permeable to Mg(2+), Na(+). K(+) and Cs(+). Proposed to play a role in zinc homeostasis probably implicating its association with TMEM163. In adaptive immunity, TRPML2 and TRPML1 may play redundant roles in the function of the specialized lysosomes of B cells. Its function is as follows. May contribute to cellular lipase activity within the late endosomal pathway or at the cell surface which may be involved in processes of membrane reshaping and vesiculation, especially the growth of tubular structures. However, it is not known, whether it conveys the enzymatic activity directly, or merely facilitates the activity of an associated phospholipase. In Mus musculus (Mouse), this protein is Mucolipin-1.